Consider the following 607-residue polypeptide: Granule-bound starch synthase 1, chloroplastic/amyloplastic (607 aa).

Residues 1-77 (MASITASHHF…RPGCSATIVC (77 aa)) constitute a chloroplast transit peptide. K95 provides a ligand contact to ADP-alpha-D-glucose. A disordered region spans residues 585–607 (SGSEPGVEGEEIAPLAKENVATP).

It belongs to the glycosyltransferase 1 family. Bacterial/plant glycogen synthase subfamily.

It is found in the plastid. The protein resides in the chloroplast. Its subcellular location is the amyloplast. It catalyses the reaction an NDP-alpha-D-glucose + [(1-&gt;4)-alpha-D-glucosyl](n) = [(1-&gt;4)-alpha-D-glucosyl](n+1) + a ribonucleoside 5'-diphosphate + H(+). It participates in glycan biosynthesis; starch biosynthesis. This is Granule-bound starch synthase 1, chloroplastic/amyloplastic (WAXY) from Solanum tuberosum (Potato).